An 848-amino-acid polypeptide reads, in one-letter code: Aryl hydrocarbon receptor (848 aa).

Met1 is modified (N-acetylmethionine). Residues 1-10 (MNSSSANITY) constitute a propeptide that is removed on maturation. The span at 1-10 (MNSSSANITY) shows a compositional bias: polar residues. Positions 1-39 (MNSSSANITYASRKRRKPVQKTVKPIPAEGIKSNPSKRH) are disordered. 2 short sequence motifs (nuclear localization signal) span residues 13–16 (RKRR) and 37–42 (KRHRDR). The bHLH domain maps to 27 to 80 (PAEGIKSNPSKRHRDRLNTELDRLASLLPFPQDVINKLDKLSVLRLSVSYLRAK). A DNA-binding region spans residues 38 to 66 (RHRDRLNTELDRLASLLPFPQDVINKLDK). Required for maintaining the overall integrity of the AHR:ARNT heterodimer and its transcriptional activity stretches follow at residues 50 to 82 (LASLLPFPQDVINKLDKLSVLRLSVSYLRAKSF), 118 to 126 (LLQALNGFV), and 266 to 268 (FAI). Positions 64 to 72 (LDKLSVLRL) match the Nuclear export signal motif. The 71-residue stretch at 111–181 (NLQEGEFLLQ…RQLHWALNPS (71 aa)) folds into the PAS 1 domain. In terms of domain architecture, PAS 2 spans 275-342 (PSILEIRTKN…CAESHIRMIK (68 aa)). In terms of domain architecture, PAC spans 348-386 (MIVFRLLTKNNRWTWVQSNARLLYKNGRPDYIIVTQRPL). Residues 824–848 (TTHLQPLHHPSEARPFPDLTSSGFL) are disordered.

In terms of assembly, homodimer. Heterodimer; efficient DNA binding requires dimerization with another bHLH protein. Interacts with ARNT; the heterodimer ARNT:AHR binds to core DNA sequence 5'-TGCGTG-3' within the dioxin response element (DRE) of target gene promoters and activates their transcription. Binds MYBBP1A. Interacts with coactivators including SRC-1, RIP140 and NOCA7, and with the corepressor SMRT. Interacts with NEDD8 and IVNS1ABP. Interacts with BMAL1. Interacts with HSP90AB1. Interacts with TIPARP; leading to mono-ADP-ribosylation of AHR and subsequent inhibition of AHR. Post-translationally, mono-ADP-ribosylated, leading to inhibit transcription activator activity of AHR. In terms of tissue distribution, expressed in all tissues tested including blood, brain, heart, kidney, liver, lung, pancreas and skeletal muscle. Expressed in retinal photoreceptors.

Its subcellular location is the cytoplasm. It localises to the nucleus. In terms of biological role, ligand-activated transcription factor that enables cells to adapt to changing conditions by sensing compounds from the environment, diet, microbiome and cellular metabolism, and which plays important roles in development, immunity and cancer. Upon ligand binding, translocates into the nucleus, where it heterodimerizes with ARNT and induces transcription by binding to xenobiotic response elements (XRE). Regulates a variety of biological processes, including angiogenesis, hematopoiesis, drug and lipid metabolism, cell motility and immune modulation. Xenobiotics can act as ligands: upon xenobiotic-binding, activates the expression of multiple phase I and II xenobiotic chemical metabolizing enzyme genes (such as the CYP1A1 gene). Mediates biochemical and toxic effects of halogenated aromatic hydrocarbons. Next to xenobiotics, natural ligands derived from plants, microbiota, and endogenous metabolism are potent AHR agonists. Tryptophan (Trp) derivatives constitute an important class of endogenous AHR ligands. Acts as a negative regulator of anti-tumor immunity: indoles and kynurenic acid generated by Trp catabolism act as ligand and activate AHR, thereby promoting AHR-driven cancer cell motility and suppressing adaptive immunity. Regulates the circadian clock by inhibiting the basal and circadian expression of the core circadian component PER1. Inhibits PER1 by repressing the CLOCK-BMAL1 heterodimer mediated transcriptional activation of PER1. The heterodimer ARNT:AHR binds to core DNA sequence 5'-TGCGTG-3' within the dioxin response element (DRE) of target gene promoters and activates their transcription. This chain is Aryl hydrocarbon receptor, found in Homo sapiens (Human).